A 215-amino-acid polypeptide reads, in one-letter code: Adenylate kinase (215 aa).

10–15 (GAGKGT) contributes to the ATP binding site. Residues 30-59 (STGDMLRAAIKAGTPLGLEAKKIIDEGGLV) form an NMP region. AMP contacts are provided by residues T31, R36, 57-59 (GLV), 85-88 (GFPR), and Q92. The segment at 122–159 (GRRVHLASGRTYHVTYNPPKVEGKDDVTGEDLIQRDDD) is LID. ATP-binding positions include R123 and 132–133 (TY). The AMP site is built by R156 and R167. Q200 contributes to the ATP binding site.

This sequence belongs to the adenylate kinase family. As to quaternary structure, monomer.

The protein localises to the cytoplasm. The enzyme catalyses AMP + ATP = 2 ADP. It functions in the pathway purine metabolism; AMP biosynthesis via salvage pathway; AMP from ADP: step 1/1. Its function is as follows. Catalyzes the reversible transfer of the terminal phosphate group between ATP and AMP. Plays an important role in cellular energy homeostasis and in adenine nucleotide metabolism. The protein is Adenylate kinase of Neisseria meningitidis serogroup B (strain ATCC BAA-335 / MC58).